A 1436-amino-acid chain; its full sequence is Gag-Pol polyprotein (1436 aa).

Glycine 2 is lipidated: N-myristoyl glycine; by host. Residues 7–31 (VLSGGKLDAWEKIRLRPGGRKKYRL) are interaction with Gp41. The tract at residues 8–43 (LSGGKLDAWEKIRLRPGGRKKYRLKHLVWASRELER) is interaction with host CALM1. An interaction with host AP3D1 region spans residues 12–19 (KLDAWEKI). The tract at residues 14–33 (DAWEKIRLRPGGRKKYRLKH) is interaction with membrane phosphatidylinositol 4,5-bisphosphate and RNA. The Nuclear export signal motif lies at 16–22 (WEKIRLR). Positions 26–32 (RKKYRLK) match the Nuclear localization signal motif. The interval 73–77 (EDLQS) is interaction with membrane phosphatidylinositol 4,5-bisphosphate. A disordered region spans residues 110-129 (KNKQRTQQAPAAADKEKDSK). The residue at position 134 (tyrosine 134) is a Phosphotyrosine; by host. The segment at 191-229 (NTVGGHQAAMQMLKDTINEEAAEWDRLHPVHAGPIPPGQ) is interaction with human PPIA/CYPA and NUP153. Residues 279–365 (YSPVSILDIK…GGPSHKARVL (87 aa)) are dimerization/Multimerization of capsid protein p24. 2 CCHC-type zinc fingers span residues 393–410 (VKCS…NCRA) and 414–431 (KGCW…DCTG). Composition is skewed to basic and acidic residues over residues 447–457 (KAREFPPEEAR) and 464–475 (RELRVRRGDHPL). The segment at 447 to 482 (KAREFPPEEARANSPTSRELRVRRGDHPLSEAGAER) is disordered. Positions 490 to 494 (PQITL) are dimerization of protease. Positions 509–578 (KEALLDTGAD…TPVNIIGRNI (70 aa)) constitute a Peptidase A2 domain. The For protease activity; shared with dimeric partner role is filled by aspartate 514. Dimerization of protease regions lie at residues 538-544 (GIGGFIK) and 577-589 (NILT…LNLP). The Reverse transcriptase domain occupies 632-822 (EGKISKIGPE…PPFLWMGYEL (191 aa)). 3 residues coordinate Mg(2+): aspartate 698, aspartate 773, and aspartate 774. The interval 815–823 (FLWMGYELH) is RT 'primer grip'. The Tryptophan repeat motif motif lies at 986-1002 (WETWWTEHWQATWIPEW). The RNase H type-1 domain occupies 1022–1145 (IEGAETYYVD…VDKLVSSGIR (124 aa)). Mg(2+) is bound by residues aspartate 1031, glutamate 1066, aspartate 1086, and aspartate 1137. Residues 1151–1192 (DGIDKAQVQHEKYHSNWRAMASDFNLPPIVAKEIVASCDKCQ) form an Integrase-type zinc finger. Zn(2+) contacts are provided by histidine 1160, histidine 1164, cysteine 1188, and cysteine 1191. The 151-residue stretch at 1202–1352 (VDCSPGIWQL…SARERIIDII (151 aa)) folds into the Integrase catalytic domain. 3 residues coordinate Mg(2+): aspartate 1212, aspartate 1264, and glutamate 1300. Positions 1371–1418 (FRVYYRDSRDPIWKGPAKLLWKGEGAVVIQDNSEIKVVPRRKAKIIRD) form a DNA-binding region, integrase-type.

In terms of assembly, homotrimer; further assembles as hexamers of trimers. Interacts with gp41 (via C-terminus). Interacts with host CALM1; this interaction induces a conformational change in the Matrix protein, triggering exposure of the myristate group. Interacts with host AP3D1; this interaction allows the polyprotein trafficking to multivesicular bodies during virus assembly. Part of the pre-integration complex (PIC) which is composed of viral genome, matrix protein, Vpr and integrase. As to quaternary structure, homodimer; the homodimer further multimerizes as homohexamers or homopentamers. Interacts with human PPIA/CYPA; This interaction stabilizes the capsid. Interacts with human NUP153. Interacts with host PDZD8; this interaction stabilizes the capsid. Interacts with monkey TRIM5; this interaction destabilizes the capsid. Homodimer, whose active site consists of two apposed aspartic acid residues. In terms of assembly, heterodimer of p66 RT and p51 RT (RT p66/p51). Heterodimerization of RT is essential for DNA polymerase activity. The overall folding of the subdomains is similar in p66 RT and p51 RT but the spatial arrangements of the subdomains are dramatically different. As to quaternary structure, homotetramer; may further associate as a homohexadecamer. Part of the pre-integration complex (PIC) which is composed of viral genome, matrix protein, Vpr and integrase. Interacts with human SMARCB1/INI1 and human PSIP1/LEDGF isoform 1. Interacts with human KPNA3; this interaction might play a role in nuclear import of the pre-integration complex. Interacts with human NUP153; this interaction might play a role in nuclear import of the pre-integration complex. Mg(2+) is required as a cofactor. Specific enzymatic cleavages by the viral protease yield mature proteins. The protease is released by autocatalytic cleavage. The polyprotein is cleaved during and after budding, this process is termed maturation. Proteolytic cleavage of p66 RT removes the RNase H domain to yield the p51 RT subunit. Nucleocapsid protein p7 might be further cleaved after virus entry. In terms of processing, tyrosine phosphorylated presumably in the virion by a host kinase. Phosphorylation is apparently not a major regulator of membrane association. Post-translationally, phosphorylated possibly by host MAPK1; this phosphorylation is necessary for Pin1-mediated virion uncoating. Methylated by host PRMT6, impairing its function by reducing RNA annealing and the initiation of reverse transcription.

The protein resides in the host cell membrane. Its subcellular location is the host endosome. It is found in the host multivesicular body. The protein localises to the virion membrane. It localises to the host nucleus. The protein resides in the host cytoplasm. Its subcellular location is the virion. The enzyme catalyses Specific for a P1 residue that is hydrophobic, and P1' variable, but often Pro.. It catalyses the reaction Endohydrolysis of RNA in RNA/DNA hybrids. Three different cleavage modes: 1. sequence-specific internal cleavage of RNA. Human immunodeficiency virus type 1 and Moloney murine leukemia virus enzymes prefer to cleave the RNA strand one nucleotide away from the RNA-DNA junction. 2. RNA 5'-end directed cleavage 13-19 nucleotides from the RNA end. 3. DNA 3'-end directed cleavage 15-20 nucleotides away from the primer terminus.. It carries out the reaction 3'-end directed exonucleolytic cleavage of viral RNA-DNA hybrid.. The catalysed reaction is DNA(n) + a 2'-deoxyribonucleoside 5'-triphosphate = DNA(n+1) + diphosphate. Its activity is regulated as follows. Protease: The viral protease is inhibited by many synthetic protease inhibitors (PIs), such as amprenavir, atazanavir, indinavir, loprinavir, nelfinavir, ritonavir and saquinavir. Use of protease inhibitors in tritherapy regimens permit more ambitious therapeutic strategies. Reverse transcriptase/ribonuclease H: RT can be inhibited either by nucleoside RT inhibitors (NRTIs) or by non nucleoside RT inhibitors (NNRTIs). NRTIs act as chain terminators, whereas NNRTIs inhibit DNA polymerization by binding a small hydrophobic pocket near the RT active site and inducing an allosteric change in this region. Classical NRTIs are abacavir, adefovir (PMEA), didanosine (ddI), lamivudine (3TC), stavudine (d4T), tenofovir (PMPA), zalcitabine (ddC), and zidovudine (AZT). Classical NNRTIs are atevirdine (BHAP U-87201E), delavirdine, efavirenz (DMP-266), emivirine (I-EBU), and nevirapine (BI-RG-587). The tritherapies used as a basic effective treatment of AIDS associate two NRTIs and one NNRTI. Mediates, with Gag polyprotein, the essential events in virion assembly, including binding the plasma membrane, making the protein-protein interactions necessary to create spherical particles, recruiting the viral Env proteins, and packaging the genomic RNA via direct interactions with the RNA packaging sequence (Psi). Gag-Pol polyprotein may regulate its own translation, by the binding genomic RNA in the 5'-UTR. At low concentration, the polyprotein would promote translation, whereas at high concentration, the polyprotein would encapsidate genomic RNA and then shut off translation. In terms of biological role, targets the polyprotein to the plasma membrane via a multipartite membrane-binding signal, that includes its myristoylated N-terminus. Matrix protein is part of the pre-integration complex. Implicated in the release from host cell mediated by Vpu. Binds to RNA. Functionally, forms the conical core that encapsulates the genomic RNA-nucleocapsid complex in the virion. Most core are conical, with only 7% tubular. The core is constituted by capsid protein hexamer subunits. The core is disassembled soon after virion entry. Host restriction factors such as TRIM5-alpha or TRIMCyp bind retroviral capsids and cause premature capsid disassembly, leading to blocks in reverse transcription. Capsid restriction by TRIM5 is one of the factors which restricts HIV-1 to the human species. Host PIN1 apparently facilitates the virion uncoating. On the other hand, interactions with PDZD8 or CYPA stabilize the capsid. Its function is as follows. Encapsulates and protects viral dimeric unspliced genomic RNA (gRNA). Binds these RNAs through its zinc fingers. Acts as a nucleic acid chaperone which is involved in rearangement of nucleic acid secondary structure during gRNA retrotranscription. Also facilitates template switch leading to recombination. As part of the polyprotein, participates in gRNA dimerization, packaging, tRNA incorporation and virion assembly. Aspartyl protease that mediates proteolytic cleavages of Gag and Gag-Pol polyproteins during or shortly after the release of the virion from the plasma membrane. Cleavages take place as an ordered, step-wise cascade to yield mature proteins. This process is called maturation. Displays maximal activity during the budding process just prior to particle release from the cell. Also cleaves Nef and Vif, probably concomitantly with viral structural proteins on maturation of virus particles. Hydrolyzes host EIF4GI and PABP1 in order to shut off the capped cellular mRNA translation. The resulting inhibition of cellular protein synthesis serves to ensure maximal viral gene expression and to evade host immune response. Also mediates cleavage of host YTHDF3. Mediates cleavage of host CARD8, thereby activating the CARD8 inflammasome, leading to the clearance of latent HIV-1 in patient CD4(+) T-cells after viral reactivation; in contrast, HIV-1 can evade CARD8-sensing when its protease remains inactive in infected cells prior to viral budding. In terms of biological role, multifunctional enzyme that converts the viral RNA genome into dsDNA in the cytoplasm, shortly after virus entry into the cell. This enzyme displays a DNA polymerase activity that can copy either DNA or RNA templates, and a ribonuclease H (RNase H) activity that cleaves the RNA strand of RNA-DNA heteroduplexes in a partially processive 3' to 5' endonucleasic mode. Conversion of viral genomic RNA into dsDNA requires many steps. A tRNA(3)-Lys binds to the primer-binding site (PBS) situated at the 5'-end of the viral RNA. RT uses the 3' end of the tRNA primer to perform a short round of RNA-dependent minus-strand DNA synthesis. The reading proceeds through the U5 region and ends after the repeated (R) region which is present at both ends of viral RNA. The portion of the RNA-DNA heteroduplex is digested by the RNase H, resulting in a ssDNA product attached to the tRNA primer. This ssDNA/tRNA hybridizes with the identical R region situated at the 3' end of viral RNA. This template exchange, known as minus-strand DNA strong stop transfer, can be either intra- or intermolecular. RT uses the 3' end of this newly synthesized short ssDNA to perform the RNA-dependent minus-strand DNA synthesis of the whole template. RNase H digests the RNA template except for two polypurine tracts (PPTs) situated at the 5'-end and near the center of the genome. It is not clear if both polymerase and RNase H activities are simultaneous. RNase H probably can proceed both in a polymerase-dependent (RNA cut into small fragments by the same RT performing DNA synthesis) and a polymerase-independent mode (cleavage of remaining RNA fragments by free RTs). Secondly, RT performs DNA-directed plus-strand DNA synthesis using the PPTs that have not been removed by RNase H as primers. PPTs and tRNA primers are then removed by RNase H. The 3' and 5' ssDNA PBS regions hybridize to form a circular dsDNA intermediate. Strand displacement synthesis by RT to the PBS and PPT ends produces a blunt ended, linear dsDNA copy of the viral genome that includes long terminal repeats (LTRs) at both ends. Functionally, catalyzes viral DNA integration into the host chromosome, by performing a series of DNA cutting and joining reactions. This enzyme activity takes place after virion entry into a cell and reverse transcription of the RNA genome in dsDNA. The first step in the integration process is 3' processing. This step requires a complex comprising the viral genome, matrix protein, Vpr and integrase. This complex is called the pre-integration complex (PIC). The integrase protein removes 2 nucleotides from each 3' end of the viral DNA, leaving recessed CA OH's at the 3' ends. In the second step, the PIC enters cell nucleus. This process is mediated through integrase and Vpr proteins, and allows the virus to infect a non dividing cell. This ability to enter the nucleus is specific of lentiviruses, other retroviruses cannot and rely on cell division to access cell chromosomes. In the third step, termed strand transfer, the integrase protein joins the previously processed 3' ends to the 5' ends of strands of target cellular DNA at the site of integration. The 5'-ends are produced by integrase-catalyzed staggered cuts, 5 bp apart. A Y-shaped, gapped, recombination intermediate results, with the 5'-ends of the viral DNA strands and the 3' ends of target DNA strands remaining unjoined, flanking a gap of 5 bp. The last step is viral DNA integration into host chromosome. This involves host DNA repair synthesis in which the 5 bp gaps between the unjoined strands are filled in and then ligated. Since this process occurs at both cuts flanking the HIV genome, a 5 bp duplication of host DNA is produced at the ends of HIV-1 integration. Alternatively, Integrase may catalyze the excision of viral DNA just after strand transfer, this is termed disintegration. This is Gag-Pol polyprotein (gag-pol) from Human immunodeficiency virus type 1 group M subtype H (isolate VI991) (HIV-1).